Here is a 993-residue protein sequence, read N- to C-terminus: Protein translocase subunit SecA (993 aa).

Residues Q102, 120–124 (GEGKT), and D523 contribute to the ATP site. A disordered region spans residues 910–962 (ENAPEPQISGGNGQQPPQRRQQTSLDDLEKQFERKKKRELEQARMAGGGMPDA). Residues 936-951 (DLEKQFERKKKRELEQ) show a composition bias toward basic and acidic residues. Zn(2+) is bound by residues C979, C981, C990, and H991.

This sequence belongs to the SecA family. Monomer and homodimer. Part of the essential Sec protein translocation apparatus which comprises SecA, SecYEG and auxiliary proteins SecDF. Other proteins may also be involved. Zn(2+) serves as cofactor.

Its subcellular location is the cell inner membrane. The protein resides in the cytoplasm. The enzyme catalyses ATP + H2O + cellular proteinSide 1 = ADP + phosphate + cellular proteinSide 2.. Functionally, part of the Sec protein translocase complex. Interacts with the SecYEG preprotein conducting channel. Has a central role in coupling the hydrolysis of ATP to the transfer of proteins into and across the cell membrane, serving as an ATP-driven molecular motor driving the stepwise translocation of polypeptide chains across the membrane. This chain is Protein translocase subunit SecA, found in Koribacter versatilis (strain Ellin345).